Here is a 171-residue protein sequence, read N- to C-terminus: Ribosome maturation factor RimP (171 aa).

This sequence belongs to the RimP family.

It localises to the cytoplasm. Its function is as follows. Required for maturation of 30S ribosomal subunits. The chain is Ribosome maturation factor RimP from Anaeromyxobacter sp. (strain Fw109-5).